Consider the following 390-residue polypeptide: MMNPVLWLQMTNMISYQGLVRTFLNKNDLKAFIAFPSSLYPDDPNWIPPLFIERNEHLSAKNPGTDHIIWQAWVAKKAGQIVGRITAQIDTLHRERYGKDTGHFGMIDAIDDPQVFAALFGAAEAWLKSQGASKISGPFSLNINQESGLLIEGFDTPPCAMMPHGKPWYAAHIEQLGYHKGIDLLAWWMQRTDLTFSPALKKLMDQVRKKVTIRCINRQRFAEEMQILREIFNSGWQHNWGFVPFTEHEFATMGDQLKYLVPDDMIYIAEIDSAPCAFIVGLPNINEAIADLNGSLFPFGWAKLLWRLKVSGVRTARVPLMGVRDEYQFSRIGPVIALLLIEALRDPFARRKIDALEMSWILETNTGMNNMLERIGAEPYKRYRLYEKQI.

In Escherichia coli (strain K12), this protein is Protein YghO (yghO).